We begin with the raw amino-acid sequence, 676 residues long: DNA-directed RNA polymerase subunit beta' (676 aa).

Zn(2+)-binding residues include C69, C71, C87, and C90. Residues D489, D491, and D493 each contribute to the Mg(2+) site.

It belongs to the RNA polymerase beta' chain family. RpoC1 subfamily. In plastids the minimal PEP RNA polymerase catalytic core is composed of four subunits: alpha, beta, beta', and beta''. When a (nuclear-encoded) sigma factor is associated with the core the holoenzyme is formed, which can initiate transcription. Mg(2+) serves as cofactor. The cofactor is Zn(2+).

Its subcellular location is the plastid. The protein localises to the chloroplast. It catalyses the reaction RNA(n) + a ribonucleoside 5'-triphosphate = RNA(n+1) + diphosphate. Its function is as follows. DNA-dependent RNA polymerase catalyzes the transcription of DNA into RNA using the four ribonucleoside triphosphates as substrates. In Lolium perenne (Perennial ryegrass), this protein is DNA-directed RNA polymerase subunit beta'.